The chain runs to 241 residues: 3-deoxy-D-manno-octulosonic acid kinase (241 aa).

Asp-171 is a catalytic residue.

The protein belongs to the protein kinase superfamily. KdkA/RfaP family.

It is found in the cell inner membrane. It catalyses the reaction an alpha-Kdo-(2-&gt;6)-lipid IVA + ATP = a 4-O-phospho-alpha-Kdo-(2-&gt;6)-lipid IVA + ADP + H(+). It participates in bacterial outer membrane biogenesis; LPS core biosynthesis. Catalyzes the ATP-dependent phosphorylation of the 3-deoxy-D-manno-octulosonic acid (Kdo) residue in Kdo-lipid IV(A) at the 4-OH position. The sequence is that of 3-deoxy-D-manno-octulosonic acid kinase from Haemophilus influenzae (strain PittGG).